The following is a 501-amino-acid chain: Mitochondrial inner membrane i-AAA protease supercomplex subunit MGR3 (501 aa).

At 1–77 (MLLQGMRLSQ…PKPNLKKKNR (77 aa)) the chain is on the mitochondrial matrix side. The interval 39-72 (RPPASNFNTQESAPIPESPANSPTRPQMAPKPNL) is disordered. A helical transmembrane segment spans residues 78–95 (SLMYSIIGVSIVGLYFWF). Residues 96 to 501 (KSNSRKQKLP…LKAAKKEGLN (406 aa)) are Mitochondrial intermembrane-facing. TPR repeat units lie at residues 109–144 (QKVW…CDRS), 154–187 (TRIE…FFEA), 386–420 (GTYI…AKRN), and 440–473 (ALST…AKET).

Belongs to the MGR3 family. As to quaternary structure, component of the mitochondrial inner membrane i-AAA protease supercomplex composed of MGR1, MGR3 and YME1. With MGR1, forms a subcomplex that binds to YME1 and to substrates to facilitate proteolysis.

The protein resides in the mitochondrion inner membrane. In terms of biological role, component of the mitochondrial inner membrane i-AAA protease supercomplex, which degrades misfolded mitochondrial proteins. Together with MGR1, functions in an adapter complex that targets substrates to the i-AAA protease for degradation. Required for growth of cells lacking the mitochondrial genome. This Saccharomyces cerevisiae (strain ATCC 204508 / S288c) (Baker's yeast) protein is Mitochondrial inner membrane i-AAA protease supercomplex subunit MGR3 (MGR3).